The sequence spans 56 residues: Large ribosomal subunit protein eL20 (56 aa).

Residues 1–24 (MSTYTVRGSFPARDGPQQFEKEVE) are disordered.

It belongs to the eukaryotic ribosomal protein eL20 family. In terms of assembly, part of the 50S ribosomal subunit. Binds 23S rRNA.

The sequence is that of Large ribosomal subunit protein eL20 from Haloarcula marismortui (strain ATCC 43049 / DSM 3752 / JCM 8966 / VKM B-1809) (Halobacterium marismortui).